A 177-amino-acid polypeptide reads, in one-letter code: Parathyroid hormone-related protein (177 aa).

The signal sequence occupies residues 1–24 (MLWRLVQQWSVAVFLLSYSVPSCG). Residues 25–34 (RSVEELGRRL) constitute a propeptide that is removed on maturation. The important for receptor binding stretch occupies residues 57 to 68 (RFFLHHLIAEIH). The interval 74–149 (ATSEVSPNSK…KRRTRSAWLT (76 aa)) is disordered. Residues 76-90 (SEVSPNSKPAPNTKN) are compositionally biased toward polar residues. Positions 108 to 129 (TNKVETYKEQPLKTPGKKKKSK) match the Nuclear localization signal motif. The span at 109 to 118 (NKVETYKEQP) shows a compositional bias: basic and acidic residues. The span at 122-132 (PGKKKKSKPGK) shows a compositional bias: basic residues.

This sequence belongs to the parathyroid hormone family. PTHrP interacts with PTH1R (via N-terminal extracellular domain). There are several secretory forms, including osteostatin, arising from endoproteolytic cleavage of the initial translation product. Each of these secretory forms is believed to have one or more of its own receptors that mediates the normal paracrine, autocrine and endocrine actions.

Its subcellular location is the secreted. It localises to the cytoplasm. It is found in the nucleus. In terms of biological role, neuroendocrine peptide which is a critical regulator of cellular and organ growth, development, migration, differentiation and survival and of epithelial calcium ion transport. Acts by binding to its receptor, PTH1R, activating G protein-coupled receptor signaling. Regulates endochondral bone development and epithelial-mesenchymal interactions during the formation of the mammary glands and teeth. Required for skeletal homeostasis. Promotes mammary mesenchyme differentiation and bud outgrowth by modulating mesenchymal cell responsiveness to BMPs. Up-regulates BMPR1A expression in the mammary mesenchyme and this increases the sensitivity of these cells to BMPs and allows them to respond to BMP4 in a paracrine and/or autocrine fashion. BMP4 signaling in the mesenchyme, in turn, triggers epithelial outgrowth and augments MSX2 expression, which causes the mammary mesenchyme to inhibit hair follicle formation within the nipple sheath. Its function is as follows. Potent inhibitor of osteoclastic bone resorption. The chain is Parathyroid hormone-related protein (PTHLH) from Bos taurus (Bovine).